The sequence spans 278 residues: 4-deoxy-L-threo-5-hexosulose-uronate ketol-isomerase (278 aa).

Residues His-196, His-198, Glu-203, and His-245 each coordinate Zn(2+).

This sequence belongs to the KduI family. Homohexamer. Zn(2+) serves as cofactor.

It catalyses the reaction 5-dehydro-4-deoxy-D-glucuronate = 3-deoxy-D-glycero-2,5-hexodiulosonate. It functions in the pathway glycan metabolism; pectin degradation; 2-dehydro-3-deoxy-D-gluconate from pectin: step 4/5. Functionally, catalyzes the isomerization of 5-dehydro-4-deoxy-D-glucuronate to 3-deoxy-D-glycero-2,5-hexodiulosonate. In Escherichia coli (strain 55989 / EAEC), this protein is 4-deoxy-L-threo-5-hexosulose-uronate ketol-isomerase.